An 87-amino-acid chain; its full sequence is Apolipoprotein C-I (87 aa).

The first 26 residues, 1-26 (MRFILSLPVLAVVLAMVLEGPAPAQA), serve as a signal peptide directing secretion.

This sequence belongs to the apolipoprotein C1 family.

The protein resides in the secreted. Inhibitor of lipoprotein binding to the low density lipoprotein (LDL) receptor, LDL receptor-related protein, and very low density lipoprotein (VLDL) receptor. Associates with high density lipoproteins (HDL) and the triacylglycerol-rich lipoproteins in the plasma and makes up about 10% of the protein of the VLDL and 2% of that of HDL. Appears to interfere directly with fatty acid uptake and is also the major plasma inhibitor of cholesteryl ester transfer protein (CETP). Binds free fatty acids and reduces their intracellular esterification. Modulates the interaction of APOE with beta-migrating VLDL and inhibits binding of beta-VLDL to the LDL receptor-related protein. The polypeptide is Apolipoprotein C-I (APOC1) (Pteropus alecto (Black flying fox)).